Here is a 144-residue protein sequence, read N- to C-terminus: Large ribosomal subunit protein uL15 (144 aa).

A disordered region spans residues 1 to 55 (MQLNELKPVAGSRFKRLRKGRGLSSGHGFTSGRGTKGQKAHGKTRLGFEGGQMPL). A compositionally biased stretch (gly residues) spans 23–35 (LSSGHGFTSGRGT).

Belongs to the universal ribosomal protein uL15 family. In terms of assembly, part of the 50S ribosomal subunit.

In terms of biological role, binds to the 23S rRNA. This chain is Large ribosomal subunit protein uL15, found in Limosilactobacillus fermentum (strain NBRC 3956 / LMG 18251) (Lactobacillus fermentum).